A 168-amino-acid polypeptide reads, in one-letter code: Peptidyl-Lys metalloendopeptidase (168 aa).

Intrachain disulfides connect C6/C76 and C78/C98. Position 118 (H118) interacts with Zn(2+). Residue E119 is part of the active site. Zn(2+)-binding residues include H122 and D131.

It depends on Zn(2+) as a cofactor.

It localises to the secreted. It catalyses the reaction Preferential cleavage in proteins: -Xaa-|-Lys- (in which Xaa may be Pro).. Its activity is regulated as follows. Inhibited by chelating agents such as EDTA and 1,10-phenanthroline. In Pleurotus ostreatus (Oyster mushroom), this protein is Peptidyl-Lys metalloendopeptidase (MEP).